The primary structure comprises 204 residues: Holliday junction branch migration complex subunit RuvA (204 aa).

The interval 1–63 is domain I; the sequence is MIGKLSGKAD…EEHIHLYGFL (63 aa). Residues 64–142 form a domain II region; the sequence is TLEEKNFFNL…KISSSSAIKD (79 aa). Residues 143 to 153 are flexible linker; that stretch reads SLNIKNITPVT. A domain III region spans residues 153 to 204; it reads TSNEVMKALINLGFSRFEAQNVVQGIITQNPKISIDELIKTALKNRNSKFFS.

It belongs to the RuvA family. Homotetramer. Forms an RuvA(8)-RuvB(12)-Holliday junction (HJ) complex. HJ DNA is sandwiched between 2 RuvA tetramers; dsDNA enters through RuvA and exits via RuvB. An RuvB hexamer assembles on each DNA strand where it exits the tetramer. Each RuvB hexamer is contacted by two RuvA subunits (via domain III) on 2 adjacent RuvB subunits; this complex drives branch migration. In the full resolvosome a probable DNA-RuvA(4)-RuvB(12)-RuvC(2) complex forms which resolves the HJ.

Its subcellular location is the cytoplasm. Its function is as follows. The RuvA-RuvB-RuvC complex processes Holliday junction (HJ) DNA during genetic recombination and DNA repair, while the RuvA-RuvB complex plays an important role in the rescue of blocked DNA replication forks via replication fork reversal (RFR). RuvA specifically binds to HJ cruciform DNA, conferring on it an open structure. The RuvB hexamer acts as an ATP-dependent pump, pulling dsDNA into and through the RuvAB complex. HJ branch migration allows RuvC to scan DNA until it finds its consensus sequence, where it cleaves and resolves the cruciform DNA. The protein is Holliday junction branch migration complex subunit RuvA of Rickettsia canadensis (strain McKiel).